Consider the following 174-residue polypeptide: Disulfide bond formation protein B (174 aa).

At 1-14 (MLNFLNICSKTRKS) the chain is on the cytoplasmic side. Residues 15–31 (WVLLIFTVVILELIALY) form a helical membrane-spanning segment. Residues 32-49 (LQHIVLIKPCVLCVYQRC) are Periplasmic-facing. C41 and C44 are oxidised to a cystine. Residues 50-65 (ALCGIGIAGLIGTIAP) traverse the membrane as a helical segment. The Cytoplasmic segment spans residues 66–71 (FTPLRF). The helical transmembrane segment at 72–89 (FSIPIWIYSAWKGLLLAK) threads the bilayer. Residues 90–144 (EYTDIQLHPSPFFMCDLFVQFPHWLPLNKWWPSMFDADGDCAEYKWYFLSLEISQ) lie on the Periplasmic side of the membrane. C104 and C130 are disulfide-bonded. The chain crosses the membrane as a helical span at residues 145-163 (WMLIIFANYLIIAILVSLS). The Cytoplasmic portion of the chain corresponds to 164 to 174 (QIIDLKKWNNK).

It belongs to the DsbB family.

It is found in the cell inner membrane. Its function is as follows. Required for disulfide bond formation in some periplasmic proteins. Acts by oxidizing the DsbA protein. This chain is Disulfide bond formation protein B, found in Blochmanniella pennsylvanica (strain BPEN).